The chain runs to 805 residues: Leucine--tRNA ligase (805 aa).

A 'HIGH' region motif is present at residues proline 41–histidine 52. The short motif at lysine 577 to serine 581 is the 'KMSKS' region element. Lysine 580 is a binding site for ATP.

It belongs to the class-I aminoacyl-tRNA synthetase family.

It is found in the cytoplasm. The enzyme catalyses tRNA(Leu) + L-leucine + ATP = L-leucyl-tRNA(Leu) + AMP + diphosphate. This Staphylococcus aureus (strain JH1) protein is Leucine--tRNA ligase.